A 319-amino-acid polypeptide reads, in one-letter code: D-alanine--D-alanine ligase (319 aa).

Residues 120–315 (KRVLAQAGVP…YPELLRRLVE (196 aa)) enclose the ATP-grasp domain. Position 147–198 (147–198 (DPPFFVKPANTGSSVGISRVERFQDLEAALALAFRYDEKAVVEKALSPVREL)) interacts with ATP. Residues Asp270, Glu282, and Asn284 each coordinate Mg(2+).

This sequence belongs to the D-alanine--D-alanine ligase family. Mg(2+) is required as a cofactor. It depends on Mn(2+) as a cofactor.

It is found in the cytoplasm. The enzyme catalyses 2 D-alanine + ATP = D-alanyl-D-alanine + ADP + phosphate + H(+). Its pathway is cell wall biogenesis; peptidoglycan biosynthesis. Cell wall formation. The sequence is that of D-alanine--D-alanine ligase from Thermus thermophilus (strain ATCC BAA-163 / DSM 7039 / HB27).